We begin with the raw amino-acid sequence, 188 residues long: Peptidyl-tRNA hydrolase (188 aa).

Residue F14 participates in tRNA binding. Catalysis depends on H19, which acts as the Proton acceptor. TRNA contacts are provided by Y64, N66, and N112.

Belongs to the PTH family. As to quaternary structure, monomer.

The protein localises to the cytoplasm. The catalysed reaction is an N-acyl-L-alpha-aminoacyl-tRNA + H2O = an N-acyl-L-amino acid + a tRNA + H(+). Functionally, hydrolyzes ribosome-free peptidyl-tRNAs (with 1 or more amino acids incorporated), which drop off the ribosome during protein synthesis, or as a result of ribosome stalling. Its function is as follows. Catalyzes the release of premature peptidyl moieties from peptidyl-tRNA molecules trapped in stalled 50S ribosomal subunits, and thus maintains levels of free tRNAs and 50S ribosomes. The polypeptide is Peptidyl-tRNA hydrolase (Aster yellows witches'-broom phytoplasma (strain AYWB)).